A 904-amino-acid chain; its full sequence is Alpha-actinin-4 (904 aa).

The interval 1–27 (MVDYHSAGQPYPYGGNGPGPNGDYMAQ) is disordered. The interval 1-259 (MVDYHSAGQP…IMTYVSSFYH (259 aa)) is actin-binding. Calponin-homology (CH) domains are found at residues 43–147 (KQQR…LRFA) and 156–262 (TSAK…HAFS). 4 Spectrin repeats span residues 286 to 396 (HLME…WLLN), 406 to 511 (HLAE…ALEK), 521 to 632 (ELHL…ALQD), and 642 to 745 (RLRR…EVEN). 2 consecutive EF-hand domains span residues 758–793 (EQMQ…LGYD) and 799–834 (QGDA…ETTD). Positions 771, 773, 782, 812, 814, 816, and 818 each coordinate Ca(2+).

This sequence belongs to the alpha-actinin family. Homodimer; antiparallel. Component of the CART complex. May interact with nuclear receptors.

The protein resides in the nucleus. Its subcellular location is the cytoplasm. It is found in the cell junction. The protein localises to the perinuclear region. F-actin cross-linking protein which is thought to anchor actin to a variety of intracellular structures. This is a bundling protein. Probably involved in vesicular trafficking via its association with the CART complex. Involved in tight junction assembly in epithelial cells. May also function as a transcriptional coactivator, stimulating transcription mediated by nuclear hormone receptors. In Gallus gallus (Chicken), this protein is Alpha-actinin-4.